Here is a 589-residue protein sequence, read N- to C-terminus: Zinc finger protein 703 (589 aa).

The interval Ser102 to Pro315 is disordered. Over residues Ser113–Ser122 the composition is skewed to low complexity. The segment covering Ser137–Ser148 has biased composition (basic and acidic residues). Polar residues predominate over residues Asn179–Thr188. The span at Ser196–Ser206 shows a compositional bias: low complexity. Polar residues predominate over residues Gln214–His230. Over residues Gly237–Asp250 the composition is skewed to low complexity. Over residues Arg251–Ser262 the composition is skewed to basic and acidic residues. Residues Ser272–Gln299 are compositionally biased toward low complexity. Positions Val408–Leu460 are required for interaction with Groucho and hdac2 plays an important role in repression of transcription. Residues His462 to His490 form a C2H2-type zinc finger. Residues Gly498–Gln589 are required for self-association and nuclear localization.

The protein belongs to the Elbow/Noc family. Self-associates. Interacts with nlz2. May interact with Groucho corepressor proteins.

The protein localises to the nucleus. It localises to the cytoplasm. Its function is as follows. Transcriptional corepressor which does not bind directly to DNA and may regulate transcription through recruitment of histone deacetylases to gene promoters. Required for segmental gene expression during hindbrain development. May regulate cell adhesion, migration and proliferation. The sequence is that of Zinc finger protein 703 (znf703) from Danio rerio (Zebrafish).